We begin with the raw amino-acid sequence, 480 residues long: tRNA-2-methylthio-N(6)-dimethylallyladenosine synthase (480 aa).

The MTTase N-terminal domain occupies 29–145; sequence GSFWIQTFGC…LEALLTQVDN (117 aa). Residues Cys38, Cys74, Cys108, Cys180, Cys184, and Cys187 each coordinate [4Fe-4S] cluster. The region spanning 166-403 is the Radical SAM core domain; that stretch reads RDSTICAWVN…NALVERVALQ (238 aa). Positions 406–474 constitute a TRAM domain; sequence SRYSGKVEQV…AFSLSGTPCD (69 aa).

This sequence belongs to the methylthiotransferase family. MiaB subfamily. In terms of assembly, monomer. [4Fe-4S] cluster is required as a cofactor.

The protein localises to the cytoplasm. The catalysed reaction is N(6)-dimethylallyladenosine(37) in tRNA + (sulfur carrier)-SH + AH2 + 2 S-adenosyl-L-methionine = 2-methylsulfanyl-N(6)-dimethylallyladenosine(37) in tRNA + (sulfur carrier)-H + 5'-deoxyadenosine + L-methionine + A + S-adenosyl-L-homocysteine + 2 H(+). Functionally, catalyzes the methylthiolation of N6-(dimethylallyl)adenosine (i(6)A), leading to the formation of 2-methylthio-N6-(dimethylallyl)adenosine (ms(2)i(6)A) at position 37 in tRNAs that read codons beginning with uridine. This Prochlorococcus marinus (strain MIT 9303) protein is tRNA-2-methylthio-N(6)-dimethylallyladenosine synthase.